Consider the following 222-residue polypeptide: Thiol:disulfide interchange protein DsbL (222 aa).

The N-terminal stretch at 1 to 27 (MSKLGISSLFKTILLTAALAVSFTASA) is a signal peptide. The Thioredoxin domain occupies 28 to 221 (FTEGTDYMVL…MADLIRELAS (194 aa)). A disulfide bridge links Cys-56 with Cys-59.

This sequence belongs to the thioredoxin family. DsbL subfamily. In terms of assembly, interacts with DsbI.

The protein localises to the periplasm. Its function is as follows. Involved in disulfide-bond formation. Acts by transferring its disulfide bond to other proteins. Part of a redox system composed of DsbI and DsbL that mediates formation of an essential disulfide bond in AssT. The chain is Thiol:disulfide interchange protein DsbL from Escherichia coli O6:H1 (strain CFT073 / ATCC 700928 / UPEC).